We begin with the raw amino-acid sequence, 212 residues long: uncharacterized protein (212 aa).

Positions 53, 74, and 97 each coordinate S-adenosyl-L-methionine.

The protein belongs to the methyltransferase superfamily. YrrT family.

Functionally, could be a S-adenosyl-L-methionine-dependent methyltransferase. This is an uncharacterized protein from Bacillus cereus (strain ATCC 14579 / DSM 31 / CCUG 7414 / JCM 2152 / NBRC 15305 / NCIMB 9373 / NCTC 2599 / NRRL B-3711).